The following is a 1396-amino-acid chain: G2/mitotic-specific cyclin-B3 (1396 aa).

Disordered stretches follow at residues 1–64, 259–398, and 477–500; these read MPPP…TNAS, KEKP…PQME, and TTEK…PGEL. Positions 10–34 are enriched in basic and acidic residues; the sequence is SKLETEKAQSNKITPREEQQSEKIG. A D-box motif is present at residues 54-62; sequence RSVFEDVTN. Residues 264–273 show a composition bias toward basic residues; that stretch reads VKKPHFRKKK. Positions 306-315 are enriched in polar residues; sequence LQENTNNKDA. S703 carries the post-translational modification Phosphoserine. Residues 775-796 form a disordered region; that stretch reads VDEPLSHQSPHIQNHSDTTKEA. The span at 780–790 shows a compositional bias: polar residues; sequence SHQSPHIQNHS.

It belongs to the cyclin family. Cyclin AB subfamily. In terms of assembly, interacts with CDK2 kinase. Post-translationally, ubiquitinated. Ubiquitination leads to its degradation during anaphase entry, after degradation of CCNB1. In terms of tissue distribution, expressed in testis. Also expressed in the fetal ovary, but not in the adult.

The protein localises to the nucleus. Its function is as follows. Cyclins are positive regulatory subunits of the cyclin-dependent kinases (CDKs), and thereby play an essential role in the control of the cell cycle, notably via their destruction during cell division. Its tissue specificity suggest that it may be required during early meiotic prophase I. This Mus musculus (Mouse) protein is G2/mitotic-specific cyclin-B3 (Ccnb3).